The following is a 407-amino-acid chain: Phosphopentomutase (407 aa).

Residues aspartate 10, aspartate 306, histidine 311, aspartate 347, histidine 348, and histidine 359 each coordinate Mn(2+).

It belongs to the phosphopentomutase family. Mn(2+) serves as cofactor.

The protein localises to the cytoplasm. The enzyme catalyses 2-deoxy-alpha-D-ribose 1-phosphate = 2-deoxy-D-ribose 5-phosphate. It catalyses the reaction alpha-D-ribose 1-phosphate = D-ribose 5-phosphate. It functions in the pathway carbohydrate degradation; 2-deoxy-D-ribose 1-phosphate degradation; D-glyceraldehyde 3-phosphate and acetaldehyde from 2-deoxy-alpha-D-ribose 1-phosphate: step 1/2. Functionally, isomerase that catalyzes the conversion of deoxy-ribose 1-phosphate (dRib-1-P) and ribose 1-phosphate (Rib-1-P) to deoxy-ribose 5-phosphate (dRib-5-P) and ribose 5-phosphate (Rib-5-P), respectively. This is Phosphopentomutase from Shigella boydii serotype 18 (strain CDC 3083-94 / BS512).